Reading from the N-terminus, the 23-residue chain is Glutamine synthetase (23 aa).

This sequence belongs to the glutamine synthetase family. As to quaternary structure, oligomer of 12 subunits arranged in the form of two hexagons. Requires Mg(2+) as cofactor.

It is found in the cytoplasm. The enzyme catalyses L-glutamate + NH4(+) + ATP = L-glutamine + ADP + phosphate + H(+). With respect to regulation, the activity of this enzyme could be controlled by adenylation under conditions of abundant glutamine. In terms of biological role, involved in nitrogen metabolism via ammonium assimilation. Catalyzes the ATP-dependent biosynthesis of glutamine from glutamate and ammonia. The protein is Glutamine synthetase of Phormidium lapideum.